The primary structure comprises 225 residues: 7-cyano-7-deazaguanine synthase (225 aa).

ATP is bound at residue 9–19 (YSGGLDSTTCL). 4 residues coordinate Zn(2+): Cys188, Cys198, Cys201, and Cys204.

It belongs to the QueC family. The cofactor is Zn(2+).

The enzyme catalyses 7-carboxy-7-deazaguanine + NH4(+) + ATP = 7-cyano-7-deazaguanine + ADP + phosphate + H2O + H(+). Its pathway is purine metabolism; 7-cyano-7-deazaguanine biosynthesis. Its function is as follows. Catalyzes the ATP-dependent conversion of 7-carboxy-7-deazaguanine (CDG) to 7-cyano-7-deazaguanine (preQ(0)). This Geobacter sp. (strain M21) protein is 7-cyano-7-deazaguanine synthase.